The following is a 225-amino-acid chain: uncharacterized protein (225 aa).

A run of 6 helical transmembrane segments spans residues 1-21 (MFIGIVSLFLTVLVYLGAKKV), 31-51 (SPLLVTPAVLVGLLLLVNVPY), 56-76 (LGGGLLTDMLQPATVAFAIPL), 88-108 (VEIILNVAVGSCIAIISTALI), 145-165 (VTAVFVILTALLGTVIGPMVI), and 205-225 (VSMILAAIMTLCAAPFLLSFM).

This sequence belongs to the YohK (E.coli)/YwbG (IPA-22R) (B.subtilis) family.

It localises to the cell membrane. This is an uncharacterized protein from Bacillus subtilis (strain 168).